The sequence spans 217 residues: GTPase IMAP family member GIMD1 (217 aa).

Residues 6–217 (KMIINLAVFG…ENHFQVLSLA (212 aa)) form the AIG1-type G domain. Residues 15-23 (GRTQSGKSS), Ser-36, and 148-150 (HAE) contribute to the GTP site.

This sequence belongs to the TRAFAC class TrmE-Era-EngA-EngB-Septin-like GTPase superfamily. AIG1/Toc34/Toc159-like paraseptin GTPase family. IAN subfamily.

This is GTPase IMAP family member GIMD1 (Gimd1) from Mus musculus (Mouse).